Here is a 562-residue protein sequence, read N- to C-terminus: Valerena-4,7(11)-diene synthase (562 aa).

Residues Asp314, Asp318, and Glu467 each coordinate Mg(2+). The DDXXD motif motif lies at Asp314–Asp318.

It belongs to the terpene synthase family. Requires Mg(2+) as cofactor. In terms of tissue distribution, predominantly expressed in root.

The catalysed reaction is (2E,6E)-farnesyl diphosphate = valerena-4,7(11)-diene + diphosphate. Catalyzes formation of valerena-4,7(11)-diene, one of the active ingredients responsible for the sedative effect extracted from Valeriana officinalis root. The protein is Valerena-4,7(11)-diene synthase (TPS2) of Valeriana officinalis (Valerian).